Here is a 294-residue protein sequence, read N- to C-terminus: UDP-3-O-acyl-N-acetylglucosamine deacetylase (294 aa).

3 residues coordinate Zn(2+): H75, H232, and D236. H259 functions as the Proton donor in the catalytic mechanism.

It belongs to the LpxC family. It depends on Zn(2+) as a cofactor.

It catalyses the reaction a UDP-3-O-[(3R)-3-hydroxyacyl]-N-acetyl-alpha-D-glucosamine + H2O = a UDP-3-O-[(3R)-3-hydroxyacyl]-alpha-D-glucosamine + acetate. Its pathway is glycolipid biosynthesis; lipid IV(A) biosynthesis; lipid IV(A) from (3R)-3-hydroxytetradecanoyl-[acyl-carrier-protein] and UDP-N-acetyl-alpha-D-glucosamine: step 2/6. In terms of biological role, catalyzes the hydrolysis of UDP-3-O-myristoyl-N-acetylglucosamine to form UDP-3-O-myristoylglucosamine and acetate, the committed step in lipid A biosynthesis. The polypeptide is UDP-3-O-acyl-N-acetylglucosamine deacetylase (Campylobacter hominis (strain ATCC BAA-381 / DSM 21671 / CCUG 45161 / LMG 19568 / NCTC 13146 / CH001A)).